An 859-amino-acid chain; its full sequence is Valine--tRNA ligase (859 aa).

The short motif at 46–56 (PTVSGQLHIGH) is the 'HIGH' region element. Residues 583-587 (KMSKS) carry the 'KMSKS' region motif. Position 586 (K586) interacts with ATP.

The protein belongs to the class-I aminoacyl-tRNA synthetase family. ValS type 2 subfamily. As to quaternary structure, monomer.

It is found in the cytoplasm. It carries out the reaction tRNA(Val) + L-valine + ATP = L-valyl-tRNA(Val) + AMP + diphosphate. In terms of biological role, catalyzes the attachment of valine to tRNA(Val). As ValRS can inadvertently accommodate and process structurally similar amino acids such as threonine, to avoid such errors, it has a 'posttransfer' editing activity that hydrolyzes mischarged Thr-tRNA(Val) in a tRNA-dependent manner. The polypeptide is Valine--tRNA ligase (Rickettsia felis (strain ATCC VR-1525 / URRWXCal2) (Rickettsia azadi)).